A 365-amino-acid chain; its full sequence is tRNA/tmRNA (uracil-C(5))-methyltransferase (365 aa).

Residues glutamine 189, tyrosine 217, asparagine 222, glutamate 238, and aspartate 298 each coordinate S-adenosyl-L-methionine. Cysteine 323 acts as the Nucleophile in catalysis. The Proton acceptor role is filled by glutamate 357.

Belongs to the class I-like SAM-binding methyltransferase superfamily. RNA M5U methyltransferase family. TrmA subfamily.

The enzyme catalyses uridine(54) in tRNA + S-adenosyl-L-methionine = 5-methyluridine(54) in tRNA + S-adenosyl-L-homocysteine + H(+). It catalyses the reaction uridine(341) in tmRNA + S-adenosyl-L-methionine = 5-methyluridine(341) in tmRNA + S-adenosyl-L-homocysteine + H(+). Dual-specificity methyltransferase that catalyzes the formation of 5-methyluridine at position 54 (m5U54) in all tRNAs, and that of position 341 (m5U341) in tmRNA (transfer-mRNA). The polypeptide is tRNA/tmRNA (uracil-C(5))-methyltransferase (Shewanella baltica (strain OS155 / ATCC BAA-1091)).